The chain runs to 476 residues: Siroheme synthase 1 (476 aa).

The tract at residues 1–203 (MDYLPIFADL…GQTAEAQRQL (203 aa)) is precorrin-2 dehydrogenase /sirohydrochlorin ferrochelatase. NAD(+) is bound by residues 22–23 (EV) and 43–44 (QS). A Phosphoserine modification is found at Ser128. The interval 219–476 (GEIALVGAGP…VSRPAVVNLA (258 aa)) is uroporphyrinogen-III C-methyltransferase. Pro228 serves as a coordination point for S-adenosyl-L-methionine. Asp251 (proton acceptor) is an active-site residue. The active-site Proton donor is the Lys273. Residues 304–306 (GGD), Ile309, 334–335 (TA), Met386, and Gly415 each bind S-adenosyl-L-methionine.

This sequence in the N-terminal section; belongs to the precorrin-2 dehydrogenase / sirohydrochlorin ferrochelatase family. It in the C-terminal section; belongs to the precorrin methyltransferase family.

It carries out the reaction uroporphyrinogen III + 2 S-adenosyl-L-methionine = precorrin-2 + 2 S-adenosyl-L-homocysteine + H(+). The catalysed reaction is precorrin-2 + NAD(+) = sirohydrochlorin + NADH + 2 H(+). It catalyses the reaction siroheme + 2 H(+) = sirohydrochlorin + Fe(2+). Its pathway is cofactor biosynthesis; adenosylcobalamin biosynthesis; precorrin-2 from uroporphyrinogen III: step 1/1. It functions in the pathway cofactor biosynthesis; adenosylcobalamin biosynthesis; sirohydrochlorin from precorrin-2: step 1/1. The protein operates within porphyrin-containing compound metabolism; siroheme biosynthesis; precorrin-2 from uroporphyrinogen III: step 1/1. It participates in porphyrin-containing compound metabolism; siroheme biosynthesis; siroheme from sirohydrochlorin: step 1/1. Its pathway is porphyrin-containing compound metabolism; siroheme biosynthesis; sirohydrochlorin from precorrin-2: step 1/1. Its function is as follows. Multifunctional enzyme that catalyzes the SAM-dependent methylations of uroporphyrinogen III at position C-2 and C-7 to form precorrin-2 via precorrin-1. Then it catalyzes the NAD-dependent ring dehydrogenation of precorrin-2 to yield sirohydrochlorin. Finally, it catalyzes the ferrochelation of sirohydrochlorin to yield siroheme. The sequence is that of Siroheme synthase 1 from Serratia proteamaculans (strain 568).